We begin with the raw amino-acid sequence, 107 residues long: Replication initiation control protein YabA (107 aa).

Zn(2+) contacts are provided by His-81, Cys-83, Cys-97, and Cys-100.

This sequence belongs to the YabA family. In terms of assembly, homotetramer. Interacts with both DnaA and DnaN, acting as a bridge between these two proteins. Requires Zn(2+) as cofactor.

The protein localises to the cytoplasm. The protein resides in the nucleoid. Involved in control of chromosome replication initiation. Inhibits the cooperative binding of DnaA to the oriC region, thus negatively regulating initiation of chromosome replication. Inhibits the ability of DnaA-ATP to form a helix on DNA; does not disassemble preformed DnaA-DNA helices. Decreases the residence time of DnaA on the chromosome at its binding sites (oriC, replication forks and promoter-binding sites). Tethers DnaA to the replication machinery via the DNA polymerase beta sliding clamp subunit (dnaN). Associates with oriC and other DnaA targets on the chromosome in a DnaA-dependent manner. The polypeptide is Replication initiation control protein YabA (Streptococcus equi subsp. zooepidemicus (strain MGCS10565)).